Here is a 545-residue protein sequence, read N- to C-terminus: CWF19-like protein 1 homolog (545 aa).

Residues 306–329 (YFYDMDGGRRKRQGGDNNKRDKRP) form a disordered region.

It belongs to the CWF19 family.

This Drosophila melanogaster (Fruit fly) protein is CWF19-like protein 1 homolog.